Reading from the N-terminus, the 246-residue chain is UPF0309 protein TTE0306 (246 aa).

Residues 31 to 212 (ITESLISEDS…EAEIITNMLE (182 aa)) enclose the SIS domain.

The protein belongs to the UPF0309 family.

The chain is UPF0309 protein TTE0306 from Caldanaerobacter subterraneus subsp. tengcongensis (strain DSM 15242 / JCM 11007 / NBRC 100824 / MB4) (Thermoanaerobacter tengcongensis).